A 176-amino-acid polypeptide reads, in one-letter code: Insulin-like growth factor 1 (176 aa).

The tract at residues 45-73 is b; sequence GPETLCGAELVDTLQFVCGERGFYFSKPT. Intrachain disulfides connect Cys50–Cys92, Cys62–Cys105, and Cys91–Cys96. The c stretch occupies residues 74–85; that stretch reads GYGPSSRRSHNR. The interval 86-106 is a; it reads GIVDECCFQSCELRRLEMYCA. The tract at residues 107-114 is d; that stretch reads PVKSGKAA. A propeptide spans 115–176 (e peptide); the sequence is RSVRAQRHTD…GNTGGRNYRM (62 aa). Positions 115–176 are disordered; that stretch reads RSVRAQRHTD…GNTGGRNYRM (62 aa). The segment covering 140–161 has biased composition (basic and acidic residues); that stretch reads RGTERRTAQHPDKTKPKKEVHQ.

This sequence belongs to the insulin family.

It localises to the secreted. Its function is as follows. The insulin-like growth factors, isolated from plasma, are structurally and functionally related to insulin but have a much higher growth-promoting activity. Acts as a ligand for IGF1R. Binds to the alpha subunit of IGF1R, leading to the activation of the intrinsic tyrosine kinase activity which autophosphorylates tyrosine residues in the beta subunit thus initiatiating a cascade of down-stream signaling events leading to activation of the PI3K-AKT/PKB and the Ras-MAPK pathways. Binds to integrins. Its binding to integrins and subsequent ternary complex formation with integrins and IGFR1 are essential for IGF1 signaling. The protein is Insulin-like growth factor 1 of Oncorhynchus mykiss (Rainbow trout).